The following is a 436-amino-acid chain: Carboxypeptidase A5 (436 aa).

Positions M1 to G33 are cleaved as a signal peptide. Residues Q34–R126 constitute a propeptide, activation peptide. The 294-residue stretch at S138 to T431 folds into the Peptidase M14 domain. Zn(2+) is bound by residues H196 and E199. Residues H196 to E199, R254, and N271 to R272 each bind substrate. C265 and C288 are joined by a disulfide. A Zn(2+)-binding site is contributed by H323. Residues S324 to Y325 and Y375 each bind substrate. The active-site Proton donor/acceptor is E397.

The protein belongs to the peptidase M14 family. Zn(2+) is required as a cofactor. Expression is very low or not detectable.

The protein localises to the secreted. The chain is Carboxypeptidase A5 (CPA5) from Homo sapiens (Human).